The following is a 59-amino-acid chain: Ferredoxin (59 aa).

One can recognise a 4Fe-4S ferredoxin-type domain in the interval Lys2–Asp29. [4Fe-4S] cluster-binding residues include Cys10, Cys13, and Cys16. A disulfide bond links Cys20 and Cys43. A [4Fe-4S] cluster-binding site is contributed by Cys51.

[4Fe-4S] cluster serves as cofactor. It depends on [3Fe-4S] cluster as a cofactor.

Ferredoxins are iron-sulfur proteins that transfer electrons in a wide variety of metabolic reactions. The polypeptide is Ferredoxin (Thermococcus litoralis).